Here is a 123-residue protein sequence, read N- to C-terminus: MALKIRLARAGSKKRPYYHVVVADVRAPRDGRFIETVGSWNPVLPKDAERVKLDAERIQHWIAQGAQPTDRVLRFLDQAGIAKRPSRNNPTKGEPGKKAQERLALAKQAEEEAAAKAAEAASE.

Residues 79–123 (AGIAKRPSRNNPTKGEPGKKAQERLALAKQAEEEAAAKAAEAASE) are disordered.

The protein belongs to the bacterial ribosomal protein bS16 family.

The chain is Small ribosomal subunit protein bS16 from Brucella melitensis biotype 2 (strain ATCC 23457).